Consider the following 106-residue polypeptide: ATP-dependent Clp protease adapter protein ClpS (106 aa).

This sequence belongs to the ClpS family. Binds to the N-terminal domain of the chaperone ClpA.

In terms of biological role, involved in the modulation of the specificity of the ClpAP-mediated ATP-dependent protein degradation. The polypeptide is ATP-dependent Clp protease adapter protein ClpS (Yersinia pestis bv. Antiqua (strain Antiqua)).